Here is a 134-residue protein sequence, read N- to C-terminus: UPF0102 protein Dvul_2148 (134 aa).

Belongs to the UPF0102 family.

This chain is UPF0102 protein Dvul_2148, found in Nitratidesulfovibrio vulgaris (strain DP4) (Desulfovibrio vulgaris).